The primary structure comprises 352 residues: Minor capsid protein VP2 (352 aa).

The N-myristoyl glycine; by host moiety is linked to residue G2. Residues 273–308 (SGEFIEKTLAPGGANQRIAPQWMLPLLLGLYGTVTP) form a D1 region. Residues 290 to 310 (IAPQWMLPLLLGLYGTVTPAL) traverse the membrane as a helical segment. The disordered stretch occupies residues 312–352 (AYEDAPSKKKRRMSRGSSQKAKGPRASSKTSYKRRRRSTRS). A DNA-binding region spans residues 313 to 352 (YEDAPSKKKRRMSRGSSQKAKGPRASSKTSYKRRRRSTRS). A Nuclear localization signal motif is present at residues 316-324 (APSKKKRRM). The span at 342-352 (SYKRRRRSTRS) shows a compositional bias: basic residues.

The protein belongs to the polyomaviruses capsid protein VP2 family. As to quaternary structure, forms homooligomers, and heterooligomers with VP3 in the endoplasmic reticulum membrane. Interacts (via D1 domain) with VP1. In terms of assembly, interacts (via D1 domain) with VP1.

The protein resides in the virion. It localises to the host nucleus. Its subcellular location is the host endoplasmic reticulum. It is found in the host endoplasmic reticulum membrane. Functionally, structural protein that resides within the core of the capsid surrounded by 72 VP1 pentamers. Participates in host cell receptor binding together with VP1. Following virus endocytosis and trafficking to the endoplasmic reticulum, VP2 and VP3 form oligomers and integrate into the endoplasmic reticulum membrane. Heterooligomer VP2-VP3 may create a viroporin for transporting the viral genome across the endoplasmic reticulum membrane to the cytoplasm. Nuclear entry of the viral DNA involves the selective exposure and importin recognition of VP2 or VP3 nuclear localization signal (shared C-terminus). Plays a role in virion assembly within the nucleus in particular through a DNA-binding domain located in the C-terminal region. An N-terminal myristoylation suggests a scaffold function for virion assembly. Structural protein that resides within the core of the capsid surrounded by 72 VP1 pentamers. Following virus endocytosis and trafficking to the endoplasmic reticulum, VP2 and VP3 form oligomers and integrate into the endoplasmic reticulum membrane. Heterooligomer VP2-VP3 may create a viroporin for transporting the viral genome across the endoplasmic reticulum membrane to the cytoplasm. Nuclear entry of the viral DNA involves the selective exposure and importin recognition of VP2 or VP3 nuclear localization signal (shared C-terminus). Plays a role in virion assembly within the nucleus. May participate in host cell lysis when associated with VP4. Its function is as follows. Viroporin inducing perforation of cellular membranes to trigger virus progeny release. Forms pores of 3 nm inner diameter. VP4 is expressed about 24 hours after the late structural proteins and is not incorporated into the mature virion. The polypeptide is Minor capsid protein VP2 (Simian virus 12 (strain wt100) (SV-12)).